The sequence spans 213 residues: Thiopurine S-methyltransferase (213 aa).

W10, L46, E67, and R124 together coordinate S-adenosyl-L-methionine.

It belongs to the class I-like SAM-binding methyltransferase superfamily. TPMT family.

It is found in the cytoplasm. It catalyses the reaction S-adenosyl-L-methionine + a thiopurine = S-adenosyl-L-homocysteine + a thiopurine S-methylether.. The protein is Thiopurine S-methyltransferase of Xanthobacter autotrophicus (strain ATCC BAA-1158 / Py2).